The primary structure comprises 225 residues: Sirohydrochlorin ferrochelatase, chloroplastic (225 aa).

Residues M1–V46 constitute a chloroplast transit peptide. 2 residues coordinate Fe cation: H89 and H155. [4Fe-4S] cluster-binding residues include C199, C210, C213, and C219.

The protein belongs to the CbiX family. SirB subfamily. In terms of assembly, homodimer. [4Fe-4S] cluster serves as cofactor.

It localises to the plastid. It is found in the chloroplast. It catalyses the reaction siroheme + 2 H(+) = sirohydrochlorin + Fe(2+). It functions in the pathway porphyrin-containing compound metabolism; siroheme biosynthesis; siroheme from sirohydrochlorin: step 1/1. Functionally, chelates iron to the siroheme precursor. Catalyzes the last step of the siroheme biosynthesis. Unlike its counterparts in bacteria, contains an [Fe-S] cluster which is not involved directly in the enzymatic reaction, but may play regulatory role in iron, sulfur and tetrapyrrole metabolism. The [Fe-S] cluster is required for normal plant growth. This Arabidopsis thaliana (Mouse-ear cress) protein is Sirohydrochlorin ferrochelatase, chloroplastic.